Consider the following 108-residue polypeptide: Trissin (108 aa).

A signal peptide spans 1 to 29 (MTKTTMHWLAHFQIILLCIWLMCPPSSQA). 3 disulfide bridges follow: cysteine 32/cysteine 43, cysteine 35/cysteine 52, and cysteine 39/cysteine 51. The propeptide occupies 57–108 (RKRSDPDALRQSSNRRLIDFILLQGRALFTQELRERRHNGTLMDLGLNTYYP).

It localises to the secreted. Activates the G-protein coupled receptor TrissinR in vitro, leading to increased intracellular calcium ion levels. In Drosophila melanogaster (Fruit fly), this protein is Trissin.